A 198-amino-acid polypeptide reads, in one-letter code: NADH-quinone oxidoreductase subunit B 1 (198 aa).

Positions 77, 78, 142, and 172 each coordinate [4Fe-4S] cluster.

This sequence belongs to the complex I 20 kDa subunit family. NDH-1 is composed of 14 different subunits. Subunits NuoB, C, D, E, F, and G constitute the peripheral sector of the complex. Requires [4Fe-4S] cluster as cofactor.

It is found in the cell inner membrane. It carries out the reaction a quinone + NADH + 5 H(+)(in) = a quinol + NAD(+) + 4 H(+)(out). NDH-1 shuttles electrons from NADH, via FMN and iron-sulfur (Fe-S) centers, to quinones in the respiratory chain. The immediate electron acceptor for the enzyme in this species is believed to be ubiquinone. Couples the redox reaction to proton translocation (for every two electrons transferred, four hydrogen ions are translocated across the cytoplasmic membrane), and thus conserves the redox energy in a proton gradient. This chain is NADH-quinone oxidoreductase subunit B 1, found in Rhodopseudomonas palustris (strain ATCC BAA-98 / CGA009).